Reading from the N-terminus, the 491-residue chain is Conidiogenone synthase PchP450 (491 aa).

A helical membrane pass occupies residues 2-22 (LLLWFGFFSFVCGLVIYRLQF). C430 is a binding site for heme.

It belongs to the cytochrome P450 family. It depends on heme as a cofactor.

The protein resides in the membrane. It functions in the pathway secondary metabolite biosynthesis; terpenoid biosynthesis. Its function is as follows. Cytochrome P450 monooxygenase; part of the gene cluster that mediates the biosynthesis of conidiogenone, a diterpene known to induce the conidiation. The bifunctional terpene synthase PrDS converts isopentenyl diphosphate (IPP) and dimethylallyl diphosphate (DMAPP) into deoxyconidiogenol. The C-terminal prenyltransferase (PT) domain of PrDS catalyzes formation of GGPP, whereas the N-terminal terpene cyclase (TC) domain catalyzes the cyclization of GGPP into deoxyconidiogenol. The cytochrome P450 monooxygenase PrP450 then catalyzes two rounds of oxidation to furnish conidiogenone. The chain is Conidiogenone synthase PchP450 from Penicillium rubens (strain ATCC 28089 / DSM 1075 / NRRL 1951 / Wisconsin 54-1255) (Penicillium chrysogenum).